Consider the following 334-residue polypeptide: Beta-hexosaminidase (334 aa).

Substrate-binding positions include Asp60, Arg68, Arg133, and 163-164 (KH). His176 functions as the Proton donor/acceptor in the catalytic mechanism. Residue Asp247 is the Nucleophile of the active site.

It belongs to the glycosyl hydrolase 3 family. NagZ subfamily.

The protein localises to the cytoplasm. It catalyses the reaction Hydrolysis of terminal non-reducing N-acetyl-D-hexosamine residues in N-acetyl-beta-D-hexosaminides.. Its pathway is cell wall biogenesis; peptidoglycan recycling. In terms of biological role, plays a role in peptidoglycan recycling by cleaving the terminal beta-1,4-linked N-acetylglucosamine (GlcNAc) from peptide-linked peptidoglycan fragments, giving rise to free GlcNAc, anhydro-N-acetylmuramic acid and anhydro-N-acetylmuramic acid-linked peptides. This chain is Beta-hexosaminidase, found in Xanthomonas oryzae pv. oryzae (strain MAFF 311018).